Here is a 416-residue protein sequence, read N- to C-terminus: Tyrosine--tRNA ligase (416 aa).

Tyrosine 40 contributes to the L-tyrosine binding site. A 'HIGH' region motif is present at residues 45 to 54 (ATAASLHVGH). L-tyrosine is bound by residues tyrosine 177 and glutamine 181. The 'KMSKS' region motif lies at 237–241 (KMGKS). Residue lysine 240 coordinates ATP. The 66-residue stretch at 351-416 (LSVTHFLVAA…RKKHKLVRLA (66 aa)) folds into the S4 RNA-binding domain.

This sequence belongs to the class-I aminoacyl-tRNA synthetase family. TyrS type 1 subfamily. As to quaternary structure, homodimer.

The protein resides in the cytoplasm. It catalyses the reaction tRNA(Tyr) + L-tyrosine + ATP = L-tyrosyl-tRNA(Tyr) + AMP + diphosphate + H(+). Catalyzes the attachment of tyrosine to tRNA(Tyr) in a two-step reaction: tyrosine is first activated by ATP to form Tyr-AMP and then transferred to the acceptor end of tRNA(Tyr). The chain is Tyrosine--tRNA ligase from Cereibacter sphaeroides (strain ATCC 17025 / ATH 2.4.3) (Rhodobacter sphaeroides).